Consider the following 266-residue polypeptide: Tryptophan synthase alpha chain (266 aa).

Active-site proton acceptor residues include E49 and D60.

The protein belongs to the TrpA family. Tetramer of two alpha and two beta chains.

The enzyme catalyses (1S,2R)-1-C-(indol-3-yl)glycerol 3-phosphate + L-serine = D-glyceraldehyde 3-phosphate + L-tryptophan + H2O. Its pathway is amino-acid biosynthesis; L-tryptophan biosynthesis; L-tryptophan from chorismate: step 5/5. Functionally, the alpha subunit is responsible for the aldol cleavage of indoleglycerol phosphate to indole and glyceraldehyde 3-phosphate. In Shewanella amazonensis (strain ATCC BAA-1098 / SB2B), this protein is Tryptophan synthase alpha chain.